Reading from the N-terminus, the 188-residue chain is Elongation factor P (188 aa).

Lys34 is subject to N6-(3,6-diaminohexanoyl)-5-hydroxylysine.

This sequence belongs to the elongation factor P family. Post-translationally, may be beta-lysylated on the epsilon-amino group of Lys-34 by the combined action of EpmA and EpmB, and then hydroxylated on the C5 position of the same residue by EpmC (if this protein is present). Lysylation is critical for the stimulatory effect of EF-P on peptide-bond formation. The lysylation moiety may extend toward the peptidyltransferase center and stabilize the terminal 3-CCA end of the tRNA. Hydroxylation of the C5 position on Lys-34 may allow additional potential stabilizing hydrogen-bond interactions with the P-tRNA.

It localises to the cytoplasm. It functions in the pathway protein biosynthesis; polypeptide chain elongation. Functionally, involved in peptide bond synthesis. Alleviates ribosome stalling that occurs when 3 or more consecutive Pro residues or the sequence PPG is present in a protein, possibly by augmenting the peptidyl transferase activity of the ribosome. Modification of Lys-34 is required for alleviation. The chain is Elongation factor P from Erwinia tasmaniensis (strain DSM 17950 / CFBP 7177 / CIP 109463 / NCPPB 4357 / Et1/99).